A 24-amino-acid chain; its full sequence is Metallothionein (24 aa).

Cd(2+) is bound by residues cysteine 3, cysteine 5, cysteine 8, cysteine 10, cysteine 17, cysteine 19, and cysteine 22.

This sequence belongs to the metallothionein superfamily. Type 8 family. Post-translationally, contains 4 disulfide bonds.

Functionally, metallothioneins have a high content of cysteine residues that bind various heavy metals. The sequence is that of Metallothionein from Neonectria lugdunensis (Aquatic fungus).